The sequence spans 72 residues: Large ribosomal subunit protein bL31c (72 aa).

It belongs to the bacterial ribosomal protein bL31 family. Type A subfamily. As to quaternary structure, part of the 50S ribosomal subunit.

It localises to the plastid. The protein resides in the chloroplast. Binds the 23S rRNA. The chain is Large ribosomal subunit protein bL31c from Trieres chinensis (Marine centric diatom).